Here is a 290-residue protein sequence, read N- to C-terminus: 4-diphosphocytidyl-2-C-methyl-D-erythritol kinase (290 aa).

Lys-10 is a catalytic residue. ATP is bound at residue 95 to 105; sequence PVAAGLAGGSS. Asp-137 is an active-site residue.

It belongs to the GHMP kinase family. IspE subfamily.

It catalyses the reaction 4-CDP-2-C-methyl-D-erythritol + ATP = 4-CDP-2-C-methyl-D-erythritol 2-phosphate + ADP + H(+). Its pathway is isoprenoid biosynthesis; isopentenyl diphosphate biosynthesis via DXP pathway; isopentenyl diphosphate from 1-deoxy-D-xylulose 5-phosphate: step 3/6. In terms of biological role, catalyzes the phosphorylation of the position 2 hydroxy group of 4-diphosphocytidyl-2C-methyl-D-erythritol. This Geobacillus thermodenitrificans (strain NG80-2) protein is 4-diphosphocytidyl-2-C-methyl-D-erythritol kinase.